The following is an 816-amino-acid chain: Larval serum protein 1 alpha chain (816 aa).

The first 16 residues, 1 to 16, serve as a signal peptide directing secretion; that stretch reads MKFAIAFLACVAVVTA.

It belongs to the hemocyanin family. In terms of assembly, heterohexamer, composed of three subunits, alpha, beta and gamma. Larval hemolymph.

It is found in the secreted. It localises to the extracellular space. Functionally, larval storage protein (LSP) which may serve as a store of amino acids for synthesis of adult proteins. The sequence is that of Larval serum protein 1 alpha chain (Lsp1alpha) from Drosophila melanogaster (Fruit fly).